The sequence spans 500 residues: ATP synthase subunit beta (500 aa).

Position 155–162 (155–162 (GGAGVGKT)) interacts with ATP.

The protein belongs to the ATPase alpha/beta chains family. As to quaternary structure, F-type ATPases have 2 components, CF(1) - the catalytic core - and CF(0) - the membrane proton channel. CF(1) has five subunits: alpha(3), beta(3), gamma(1), delta(1), epsilon(1). CF(0) has three main subunits: a(1), b(2) and c(9-12). The alpha and beta chains form an alternating ring which encloses part of the gamma chain. CF(1) is attached to CF(0) by a central stalk formed by the gamma and epsilon chains, while a peripheral stalk is formed by the delta and b chains.

Its subcellular location is the cell inner membrane. It carries out the reaction ATP + H2O + 4 H(+)(in) = ADP + phosphate + 5 H(+)(out). Its function is as follows. Produces ATP from ADP in the presence of a proton gradient across the membrane. The catalytic sites are hosted primarily by the beta subunits. The protein is ATP synthase subunit beta of Azobacteroides pseudotrichonymphae genomovar. CFP2.